The chain runs to 692 residues: Elongation factor G (692 aa).

Residues 8 to 282 (ENTRNIGIMA…AVLDYLPSPL (275 aa)) enclose the tr-type G domain. Residues 17–24 (AHIDAGKT), 81–85 (DTPGH), and 135–138 (NKMD) contribute to the GTP site.

This sequence belongs to the TRAFAC class translation factor GTPase superfamily. Classic translation factor GTPase family. EF-G/EF-2 subfamily.

Its subcellular location is the cytoplasm. Its function is as follows. Catalyzes the GTP-dependent ribosomal translocation step during translation elongation. During this step, the ribosome changes from the pre-translocational (PRE) to the post-translocational (POST) state as the newly formed A-site-bound peptidyl-tRNA and P-site-bound deacylated tRNA move to the P and E sites, respectively. Catalyzes the coordinated movement of the two tRNA molecules, the mRNA and conformational changes in the ribosome. This is Elongation factor G (fusA) from Halalkalibacterium halodurans (strain ATCC BAA-125 / DSM 18197 / FERM 7344 / JCM 9153 / C-125) (Bacillus halodurans).